A 428-amino-acid chain; its full sequence is Divergent protein kinase domain 1A (428 aa).

Over 1 to 27 (MARSLCPGAWLRKPYYLQARFSYVRMK) the chain is Cytoplasmic. A helical membrane pass occupies residues 28–48 (YLFFSWLVVFVGSWIIYVQYS). Residues 49-428 (TYTELCRGKD…WKKISYTNDS (380 aa)) lie on the Lumenal side of the membrane.

This sequence belongs to the DIPK family. In terms of processing, among the many cysteines in the lumenal domain, most are probably involved in disulfide bonds.

The protein resides in the endoplasmic reticulum membrane. The sequence is that of Divergent protein kinase domain 1A from Homo sapiens (Human).